The primary structure comprises 73 residues: Putative membrane protein insertion efficiency factor (73 aa).

Belongs to the UPF0161 family.

The protein localises to the cell inner membrane. Functionally, could be involved in insertion of integral membrane proteins into the membrane. In Neisseria gonorrhoeae (strain ATCC 700825 / FA 1090), this protein is Putative membrane protein insertion efficiency factor.